The following is a 151-amino-acid chain: MAAVTELPKMNQELAGAVREGLELKKVETTEKNVLPTKEDVAEEKQHVERIHEIEHFDSTKLHSTPVKEKIVLPSADDIKQEKQHLELTDKINNFPSENLKKTETIEKNVLPSPTDVAREKTLQMAASFDKSALHHVETIVSTDVRVTEAQ.

Tandem repeats lie at residues 24–29 (LKKVET), 62–67 (LHSTPV), 100–105 (LKKTET), and 134–139 (LHHVET). Residues 24-139 (LKKVETTEKN…DKSALHHVET (116 aa)) form a 4 X 6 AA repeat of L-[KH]-[KSH]-[VT]-[EP]-[TV] region.

Belongs to the thymosin beta family. In terms of assembly, interacts (via repeats 1, 2 and 4) with G-actin in a 1:3 ratio. Interacts (via repeats 2 and 3) with F-actin. As to expression, at the comma stage, enriched in the developing nerve ring (at protein level). Ubiquitously expressed in larvae and adults with enrichment in the spermatheca, the intestinal tract and the posterior bulb of the pharynx (at protein level). Expressed in oocytes and in the gonad (at protein level).

The protein resides in the cytoplasm. It is found in the cell cortex. It localises to the cell junction. Its subcellular location is the cytoskeleton. Its function is as follows. Plays an important role in the organization of the cytoskeleton by regulating actin polymerization in two ways. Firstly, by binding to and sequestering actin monomers (G actin) inhibits actin polymerization. Secondly, by binding directly filamentous actin (F actin) promotes actin polymerization. Regulates the formation of cortical actin in oocytes conferring them enough rigidity to sustain the contractions during ovulation. This is Thymosin beta from Caenorhabditis elegans.